Consider the following 512-residue polypeptide: Maturase K (512 aa).

This sequence belongs to the intron maturase 2 family. MatK subfamily.

The protein localises to the plastid. Its subcellular location is the chloroplast. Its function is as follows. Usually encoded in the trnK tRNA gene intron. Probably assists in splicing its own and other chloroplast group II introns. This Alisma canaliculatum (Water plantain) protein is Maturase K.